We begin with the raw amino-acid sequence, 526 residues long: Cyclin-L1 (526 aa).

The interval 1–36 (MASGPHSTATAAAAASSAAPSAGGSSSGTTTTTTTT) is disordered. Cyclin-like regions lie at residues 88–190 (ELIQ…RVLK) and 203–287 (KIIV…ETLR). Positions 318-526 (KGLNPDGTPA…SRSGHGRHRR (209 aa)) are disordered. Position 325 is a phosphothreonine (Thr325). Residues Ser335 and Ser338 each carry the phosphoserine modification. Residues Lys339 and Lys347 each participate in a glycyl lysine isopeptide (Lys-Gly) (interchain with G-Cter in SUMO2) cross-link. Basic and acidic residues predominate over residues 342-352 (SPREVKAEEKS). Residues Ser352 and Ser355 each carry the phosphoserine modification. A compositionally biased stretch (basic and acidic residues) spans 361-370 (VKKEPEDRQQ). Lys362 is covalently cross-linked (Glycyl lysine isopeptide (Lys-Gly) (interchain with G-Cter in SUMO2)). At Ser374 the chain carries Phosphoserine. 4 stretches are compositionally biased toward basic residues: residues 382-418 (DSKRSRNSRSASRSRSRTRSRSRSHTPRRHYNNRRSR), 438-452 (RRHHNHGSPHLKAKH), 460-476 (SNRHGHKRKKSRSRSQS), and 486-498 (KKHRHERGHHRDR). Residues 390 to 432 (RSASRSRSRTRSRSRSHTPRRHYNNRRSRSGTYSSRSRSRSRS) form an RS region. Position 445 is a phosphoserine (Ser445). Basic and acidic residues predominate over residues 499–508 (RERSRSFERS). Residues 509-526 (HKSKHHGGSRSGHGRHRR) show a composition bias toward basic residues.

Belongs to the cyclin family. Cyclin L subfamily. (Microbial infection) Interacts with human herpes virus 1 (HHV-1) transcriptional regulator ICP22. In terms of assembly, interacts with POLR2A via its hyperphosphorylated C-terminal domain (CTD). Interacts with CDK11A, CDK12 and CDK13. Isoforms 1 and 2, but not isoform 3, interact with CDK11B. May form a ternary complex with CDK11B and casein kinase II (CKII). Interacts with pre-mRNA-splicing factors, including at least SRSF1, SRSF2 and SRSF7/SLU7. Widely expressed. Overexpression in primary tumors of head and neck squamous cell carcinomas (HNSCC).

It localises to the nucleus speckle. Its subcellular location is the nucleus. The protein localises to the nucleoplasm. Involved in pre-mRNA splicing. Functions in association with cyclin-dependent kinases (CDKs). Inhibited by the CDK-specific inhibitor CDKN1A/p21. May play a role in the regulation of RNA polymerase II (pol II). May be a candidate proto-oncogene in head and neck squamous cell carcinomas (HNSCC). The sequence is that of Cyclin-L1 (CCNL1) from Homo sapiens (Human).